A 206-amino-acid polypeptide reads, in one-letter code: 3-demethoxyubiquinol 3-hydroxylase (206 aa).

The Fe cation site is built by E55, E85, H88, E137, E169, and H172.

The protein belongs to the COQ7 family. Fe cation serves as cofactor.

The protein localises to the cell membrane. It carries out the reaction a 5-methoxy-2-methyl-3-(all-trans-polyprenyl)benzene-1,4-diol + AH2 + O2 = a 3-demethylubiquinol + A + H2O. It functions in the pathway cofactor biosynthesis; ubiquinone biosynthesis. Its function is as follows. Catalyzes the hydroxylation of 2-nonaprenyl-3-methyl-6-methoxy-1,4-benzoquinol during ubiquinone biosynthesis. The protein is 3-demethoxyubiquinol 3-hydroxylase of Laribacter hongkongensis (strain HLHK9).